Consider the following 180-residue polypeptide: Shikimate kinase (180 aa).

15–20 (GAGKTT) is an ATP binding site. Thr-19 is a binding site for Mg(2+). 3 residues coordinate substrate: Asp-37, Arg-61, and Gly-83. ATP is bound at residue Arg-121. Arg-140 is a substrate binding site.

It belongs to the shikimate kinase family. Monomer. Mg(2+) is required as a cofactor.

The protein resides in the cytoplasm. The enzyme catalyses shikimate + ATP = 3-phosphoshikimate + ADP + H(+). It participates in metabolic intermediate biosynthesis; chorismate biosynthesis; chorismate from D-erythrose 4-phosphate and phosphoenolpyruvate: step 5/7. Functionally, catalyzes the specific phosphorylation of the 3-hydroxyl group of shikimic acid using ATP as a cosubstrate. The polypeptide is Shikimate kinase (Psychrobacter sp. (strain PRwf-1)).